The following is a 263-amino-acid chain: MKVAVSGFKGRMGHEVVKTILREEDLELVAVLDHEPKEKNIREIVEFSSLDVPVYGDLSEMLEEIKPDCVVDFTIPKVGYSNTKTILEHSVRAVVGTTGFTPEQISELKSIAESKKIGALIAPNFAVGAVLMMQFAQKAAKYFPNVEIIELHHDNKLDAPSGTAVKTAEMMAETREFVKQGAADEVELIEGARGGEYEGMRIHSVRLPGLVAHQEVIFGAEGQGLTIRHDSYDRISFMSGVALSVRKTKELETLIYGLENILD.

Residues 7-12 (GFKGRM), 96-98 (GTT), and 122-125 (APNF) contribute to the NAD(+) site. The active-site Proton donor/acceptor is the His152. His153 serves as a coordination point for (S)-2,3,4,5-tetrahydrodipicolinate. Lys156 (proton donor) is an active-site residue. (S)-2,3,4,5-tetrahydrodipicolinate is bound at residue 162 to 163 (GT).

The protein belongs to the DapB family.

It is found in the cytoplasm. It catalyses the reaction (S)-2,3,4,5-tetrahydrodipicolinate + NAD(+) + H2O = (2S,4S)-4-hydroxy-2,3,4,5-tetrahydrodipicolinate + NADH + H(+). The catalysed reaction is (S)-2,3,4,5-tetrahydrodipicolinate + NADP(+) + H2O = (2S,4S)-4-hydroxy-2,3,4,5-tetrahydrodipicolinate + NADPH + H(+). Its pathway is amino-acid biosynthesis; L-lysine biosynthesis via DAP pathway; (S)-tetrahydrodipicolinate from L-aspartate: step 4/4. Catalyzes the conversion of 4-hydroxy-tetrahydrodipicolinate (HTPA) to tetrahydrodipicolinate. This is 4-hydroxy-tetrahydrodipicolinate reductase from Listeria innocua serovar 6a (strain ATCC BAA-680 / CLIP 11262).